Here is a 497-residue protein sequence, read N- to C-terminus: NADH-quinone oxidoreductase subunit N (497 aa).

13 consecutive transmembrane segments (helical) span residues 12–32, 40–60, 80–100, 116–136, 166–186, 208–228, 240–260, 284–304, 316–336, 341–361, 383–403, 430–450, and 457–477; these read MAPE…DLAL, PLAW…AAMI, AFKF…AEWA, LFAL…TLFV, VING…VFGL, LALA…TVPF, PVPA…ALLL, MQPI…VVAL, SGIA…WAMI, MYLL…AHIV, AAAL…AGFI, TVIS…RPTF, and LPAG…AIGW.

Belongs to the complex I subunit 2 family. NDH-1 is composed of 14 different subunits. Subunits NuoA, H, J, K, L, M, N constitute the membrane sector of the complex.

The protein localises to the cell membrane. It catalyses the reaction a quinone + NADH + 5 H(+)(in) = a quinol + NAD(+) + 4 H(+)(out). Its function is as follows. NDH-1 shuttles electrons from NADH, via FMN and iron-sulfur (Fe-S) centers, to quinones in the respiratory chain. The immediate electron acceptor for the enzyme in this species is believed to be a menaquinone. Couples the redox reaction to proton translocation (for every two electrons transferred, four hydrogen ions are translocated across the cytoplasmic membrane), and thus conserves the redox energy in a proton gradient. This is NADH-quinone oxidoreductase subunit N from Geobacillus kaustophilus (strain HTA426).